Reading from the N-terminus, the 169-residue chain is Signal peptidase complex subunit 1 (169 aa).

Topologically, residues 1–93 (MARGGDTGCT…QKLAEQMFQG (93 aa)) are cytoplasmic. Positions 91-169 (FQGIILFSAI…RKIKRHAKNN (79 aa)) are (Microbial infection) Interaction with JEV NS2B. A helical membrane pass occupies residues 94–114 (IILFSAIVGFIYGYVAEQFGW). Residues 110 to 169 (EQFGWTVYIVMAGFAFSCLLTLPPWPIYRRHPLKWLPVQESSTDDKKPGERKIKRHAKNN) form a (Microbial infection) Interaction with HCV NS2 and HCV E2 region. Thr115 is a topological domain (lumenal). A helical transmembrane segment spans residues 116 to 136 (VYIVMAGFAFSCLLTLPPWPI). Over 137-169 (YRRHPLKWLPVQESSTDDKKPGERKIKRHAKNN) the chain is Cytoplasmic. The segment at 148–169 (QESSTDDKKPGERKIKRHAKNN) is disordered.

Belongs to the SPCS1 family. Component of the signal peptidase complex paralog A (SPC-A) composed of a catalytic subunit SEC11A and three accessory subunits SPCS1, SPCS2 and SPCS3. Component of the signal peptidase complex paralog C (SPC-C) composed of a catalytic subunit SEC11C and three accessory subunits SPCS1, SPCS2 and SPCS3. Within the complex, interacts with SPCS2 and SPCS3. The complex induces a local thinning of the ER membrane which is used to measure the length of the signal peptide (SP) h-region of protein substrates. This ensures the selectivity of the complex towards h-regions shorter than 18-20 amino acids. As to quaternary structure, (Microbial infection) Interacts with hepatitis C virus (HCV) proteins NS2 and E2. Interacts with NS2B from Japanese encephalitis virus (JEV), West Nile virus (WNV), and Zika virus (ZIKV). In terms of processing, may be phosphorylated.

It localises to the endoplasmic reticulum membrane. Its function is as follows. Component of the signal peptidase complex (SPC) which catalyzes the cleavage of N-terminal signal sequences from nascent proteins as they are translocated into the lumen of the endoplasmic reticulum. Dispensable for SPC enzymatic activity. (Microbial infection) Required for the post-translational processing of proteins involved in virion assembly and secretion from flaviviruses such as West Nile virus (WNV), Japanese encephalitis virus (JEV), Dengue virus type 2 (DENV-2), Yellow Fever virus (YFV), Zika virus (ZIKV) and hepatitis C virus (HCV). Plays a key role in the post-translational processing of flaviviral structural proteins prM, E, and NS1. In HCV, it is involved in virion assembly where it promotes the interaction between HCV virus proteins NS2 and E2. The sequence is that of Signal peptidase complex subunit 1 (SPCS1) from Homo sapiens (Human).